The primary structure comprises 391 residues: Lysophosphatidylinositol acyltransferase 10 (391 aa).

Helical transmembrane passes span 10–30, 52–72, 97–119, 323–343, and 347–367; these read LLGW…NYII, AISY…GVRI, WMYM…KISL, LTSL…IFFV, and QLGF…YGGI.

The protein belongs to the 1-acyl-sn-glycerol-3-phosphate acyltransferase family. As to expression, expressed in seam cells, vulval epithelial cells and the major epithelial syncytium hyp7, and in several head neurons including AIY interneurons.

It is found in the endoplasmic reticulum membrane. The catalysed reaction is a 2-acyl-sn-glycero-3-phospho-D-myo-inositol + an acyl-CoA = a 1,2-diacyl-sn-glycero-3-phospho-(1D-myo-inositol) + CoA. It carries out the reaction a 2-acyl-sn-glycero-3-phospho-D-myo-inositol + octadecanoyl-CoA = 1-octadecanoyl-2-acyl-sn-glycero-3-phospho-1D-myo-inositol + CoA. It functions in the pathway phospholipid metabolism; phosphatidylinositol metabolism. Acyltransferase required for the fatty acid remodeling of phosphatidylinositol (1,2-diacyl-sn-glycero-3-phosphoinositol or PI). Mediates the conversion of lysophosphatidylinositol (2-acylglycerophosphatidylinositol or LPI) into PI (LPIAT activity). Has preference for saturated and mono-unsaturated fatty acids as acyl donors and sn-2-acyl lysoPI (2-acyl-sn-glycero-3-phospho-D-myo-inositol) as acyl acceptor. Contributes to the asymmetric cell division of epithelial cells. Asymmetric cell division is the fundamental mechanism by which multicellular organisms generate cell diversity. This Caenorhabditis elegans protein is Lysophosphatidylinositol acyltransferase 10.